A 499-amino-acid polypeptide reads, in one-letter code: Tetrathionate hydrolase (499 aa).

Positions 1 to 32 (MPSIVRNHGPHNKILLSALLLALFGWVPLASA) are cleaved as a signal peptide.

The protein belongs to the tetrathionate hydrolase family. As to quaternary structure, homodimer.

Its subcellular location is the cell membrane. It carries out the reaction tetrathionate + H2O = sulfur + thiosulfate + sulfate + H(+). Functionally, catalyzes the hydrolysis of tetrathionate to generate elemental sulfur, thiosulfate and sulfate. The protein is Tetrathionate hydrolase of Acidithiobacillus ferrooxidans (strain ATCC 23270 / DSM 14882 / CIP 104768 / NCIMB 8455) (Ferrobacillus ferrooxidans (strain ATCC 23270)).